Here is a 529-residue protein sequence, read N- to C-terminus: Peptide chain release factor 3 (529 aa).

One can recognise a tr-type G domain in the interval 11-280; sequence AKRRTFAIIS…GLVEWAPAPM (270 aa). GTP-binding positions include 20-27, 88-92, and 142-145; these read SHPDAGKT, DTPGH, and NKLD.

This sequence belongs to the TRAFAC class translation factor GTPase superfamily. Classic translation factor GTPase family. PrfC subfamily.

It is found in the cytoplasm. Functionally, increases the formation of ribosomal termination complexes and stimulates activities of RF-1 and RF-2. It binds guanine nucleotides and has strong preference for UGA stop codons. It may interact directly with the ribosome. The stimulation of RF-1 and RF-2 is significantly reduced by GTP and GDP, but not by GMP. This Klebsiella pneumoniae subsp. pneumoniae (strain ATCC 700721 / MGH 78578) protein is Peptide chain release factor 3.